The primary structure comprises 99 residues: Large ribosomal subunit protein eL21 (99 aa).

Residues 1–18 show a composition bias toward basic residues; that stretch reads MVKHSRGNRTRSRKLLKK. The disordered stretch occupies residues 1 to 26; it reads MVKHSRGNRTRSRKLLKKSPRERGAV.

The protein belongs to the eukaryotic ribosomal protein eL21 family.

This chain is Large ribosomal subunit protein eL21, found in Metallosphaera sedula (strain ATCC 51363 / DSM 5348 / JCM 9185 / NBRC 15509 / TH2).